Here is a 342-residue protein sequence, read N- to C-terminus: Methylthioribose-1-phosphate isomerase (342 aa).

Substrate is bound by residues 49-51 (RGA), Arg-86, and Gln-187. The Proton donor role is filled by Asp-228. Substrate is bound at residue 238-239 (NK).

Belongs to the eIF-2B alpha/beta/delta subunits family. MtnA subfamily.

It carries out the reaction 5-(methylsulfanyl)-alpha-D-ribose 1-phosphate = 5-(methylsulfanyl)-D-ribulose 1-phosphate. It participates in amino-acid biosynthesis; L-methionine biosynthesis via salvage pathway; L-methionine from S-methyl-5-thio-alpha-D-ribose 1-phosphate: step 1/6. In terms of biological role, catalyzes the interconversion of methylthioribose-1-phosphate (MTR-1-P) into methylthioribulose-1-phosphate (MTRu-1-P). This is Methylthioribose-1-phosphate isomerase from Klebsiella pneumoniae subsp. pneumoniae (strain ATCC 700721 / MGH 78578).